A 476-amino-acid chain; its full sequence is Dermokine (476 aa).

The first 21 residues, 1–21 (MKFQGPLACLLLALCLGSGEA), serve as a signal peptide directing secretion. 4 stretches are compositionally biased toward gly residues: residues 153-169 (SQGGLGGQGQGNPGGLG), 193-202 (WGQGGNGGPP), 236-259 (GSGGGSSNSGGGSGSQSGSSGSGS), and 268-298 (SSGGSSSGSSSGGSSGGSSGGSSGNSGGSRG). The tract at residues 153–351 (SQGGLGGQGQ…ESGIQNSETS (199 aa)) is disordered. Over residues 299–315 (DSGSESSWGSSTGSSSG) the composition is skewed to low complexity. The segment covering 316-326 (NHGGSGGGNGH) has biased composition (gly residues).

It belongs to the dermokine family. In terms of assembly, homooligomer. Seems to be able to homodimerize and homotrimerize. O-glycosylated. Expressed in epidermis; in the spinous and granular layers and in placenta. Also found in the epithelia of the small intestine, macrophages of the lung and endothelial cells of the lung. Isoform 15 is expressed in epidermis and placenta. Isoform 1 is expressed in epidermis.

It localises to the secreted. Functionally, may act as a soluble regulator of keratinocyte differentiation. The sequence is that of Dermokine (DMKN) from Homo sapiens (Human).